We begin with the raw amino-acid sequence, 48 residues long: Acidic phospholipase A2 (48 aa).

Ca(2+) is bound by residues tyrosine 27, glycine 29, and glycine 31. Cysteine 28 and cysteine 44 are oxidised to a cystine. Residue histidine 47 is part of the active site. Aspartate 48 contacts Ca(2+).

Belongs to the phospholipase A2 family. Group II subfamily. D49 sub-subfamily. In terms of assembly, monomer. Requires Ca(2+) as cofactor. In terms of tissue distribution, expressed by the venom gland.

The protein localises to the secreted. It catalyses the reaction a 1,2-diacyl-sn-glycero-3-phosphocholine + H2O = a 1-acyl-sn-glycero-3-phosphocholine + a fatty acid + H(+). Inhibited by EDTA. Inhibited by Ba(2+), Cu(+), Fe(2+) and Zn(2+) ions and, to a lesser extent, by Mn(2+) and Mg(2+) ions. Functionally, snake venom phospholipase A2 (PLA2) that shows myotoxicity and induces paw edema in mice. Exhibits indirect hemolytic activity. Inhibits platelet aggregation induced by ADP and collagen. PLA2 catalyzes the calcium-dependent hydrolysis of the 2-acyl groups in 3-sn-phosphoglycerides. The protein is Acidic phospholipase A2 of Bothrops pauloensis (Neuwied's lancehead).